The chain runs to 415 residues: DNA primase DnaG (415 aa).

Residues 171 to 250 form the Toprim domain; sequence DAIIIVEGRA…AFSPRGKSVE (80 aa). The Mg(2+) site is built by glutamate 177, aspartate 219, and aspartate 221. The tract at residues 280–323 is disordered; sequence ELPGDLGGRPARTAPAHDEGGNSDTTGKQAVSQKRIRDGTSKVP. A compositionally biased stretch (polar residues) spans 301 to 311; that stretch reads NSDTTGKQAVS.

It belongs to the archaeal DnaG primase family. In terms of assembly, forms a ternary complex with MCM helicase and DNA. The cofactor is Mg(2+).

It carries out the reaction ssDNA + n NTP = ssDNA/pppN(pN)n-1 hybrid + (n-1) diphosphate.. RNA polymerase that catalyzes the synthesis of short RNA molecules used as primers for DNA polymerase during DNA replication. The polypeptide is DNA primase DnaG (Methanoregula boonei (strain DSM 21154 / JCM 14090 / 6A8)).